Reading from the N-terminus, the 420-residue chain is Arginine biosynthesis bifunctional protein ArgJ (420 aa).

Substrate-binding residues include Thr167, Lys193, Thr204, Glu284, Asn415, and Thr420. The active-site Nucleophile is Thr204.

This sequence belongs to the ArgJ family. Heterotetramer of two alpha and two beta chains.

It localises to the cytoplasm. It catalyses the reaction N(2)-acetyl-L-ornithine + L-glutamate = N-acetyl-L-glutamate + L-ornithine. The catalysed reaction is L-glutamate + acetyl-CoA = N-acetyl-L-glutamate + CoA + H(+). Its pathway is amino-acid biosynthesis; L-arginine biosynthesis; L-ornithine and N-acetyl-L-glutamate from L-glutamate and N(2)-acetyl-L-ornithine (cyclic): step 1/1. It participates in amino-acid biosynthesis; L-arginine biosynthesis; N(2)-acetyl-L-ornithine from L-glutamate: step 1/4. In terms of biological role, catalyzes two activities which are involved in the cyclic version of arginine biosynthesis: the synthesis of N-acetylglutamate from glutamate and acetyl-CoA as the acetyl donor, and of ornithine by transacetylation between N(2)-acetylornithine and glutamate. In Prochlorococcus marinus (strain NATL2A), this protein is Arginine biosynthesis bifunctional protein ArgJ.